We begin with the raw amino-acid sequence, 225 residues long: Holliday junction branch migration complex subunit RuvA (225 aa).

Positions 1–71 are domain I; it reads MISWINGDLV…EDSDLLFGFT (71 aa). The interval 72-150 is domain II; sequence SNEQKNFFIE…SEILSEEEKS (79 aa). The interval 151 to 161 is flexible linker; the sequence is KGELEIKDPEI. Residues 161-225 form a domain III region; it reads INKMIEDLQL…LDEDSSNIAR (65 aa).

The protein belongs to the RuvA family. In terms of assembly, homotetramer. Forms an RuvA(8)-RuvB(12)-Holliday junction (HJ) complex. HJ DNA is sandwiched between 2 RuvA tetramers; dsDNA enters through RuvA and exits via RuvB. An RuvB hexamer assembles on each DNA strand where it exits the tetramer. Each RuvB hexamer is contacted by two RuvA subunits (via domain III) on 2 adjacent RuvB subunits; this complex drives branch migration. In the full resolvosome a probable DNA-RuvA(4)-RuvB(12)-RuvC(2) complex forms which resolves the HJ.

The protein resides in the cytoplasm. Functionally, the RuvA-RuvB-RuvC complex processes Holliday junction (HJ) DNA during genetic recombination and DNA repair, while the RuvA-RuvB complex plays an important role in the rescue of blocked DNA replication forks via replication fork reversal (RFR). RuvA specifically binds to HJ cruciform DNA, conferring on it an open structure. The RuvB hexamer acts as an ATP-dependent pump, pulling dsDNA into and through the RuvAB complex. HJ branch migration allows RuvC to scan DNA until it finds its consensus sequence, where it cleaves and resolves the cruciform DNA. This chain is Holliday junction branch migration complex subunit RuvA, found in Prochlorococcus marinus (strain MIT 9301).